Reading from the N-terminus, the 472-residue chain is Transmembrane protein 8B (472 aa).

A disordered region spans residues 1 to 37; that stretch reads MNMPQSLGNQPLPPEPPSLRTPAEGPGATSPPEHCWP. The Extracellular portion of the chain corresponds to 1-233; that stretch reads MNMPQSLGNQ…ADALTYGFQL (233 aa). N-linked (GlcNAc...) asparagine glycosylation is found at N92 and N100. One can recognise an EGF-like domain in the interval 182–221; it reads FLSPCVDDCGPYGQCKLLRTHNYLYAACECKAGWRGWGCT. Intrachain disulfides connect C186–C196, C190–C209, and C211–C220. A helical transmembrane segment spans residues 234-254; it reads LSTLLLCLSNLMFLPPVVLAI. The Cytoplasmic segment spans residues 255–257; that stretch reads RSR. A helical membrane pass occupies residues 258–277; the sequence is YVLEAAVYTFTMFFSTFYHA. Residues 278-292 lie on the Extracellular side of the membrane; that stretch reads CDQPGIVVFCIMDYD. Residues 293 to 313 traverse the membrane as a helical segment; sequence VLQFCDFLGSLMSVWVTVIAM. Residues 314–315 are Cytoplasmic-facing; sequence AR. The chain crosses the membrane as a helical span at residues 316–336; the sequence is LQPVVKQVLYLLGAMLLSMAL. Residues 337–342 are Extracellular-facing; the sequence is QLDRHG. Residues 343 to 363 form a helical membrane-spanning segment; that stretch reads LWNLLGPSLFALGILATAWTV. The Cytoplasmic segment spans residues 364-379; it reads RSVRRRHCYPPTWRRW. Residues 380-400 traverse the membrane as a helical segment; sequence LFCLCPGSLIAGSAILLYAFV. Over 401-405 the chain is Extracellular; that stretch reads ETRDN. A helical membrane pass occupies residues 406–426; that stretch reads YFYIHSIWHMLIAGSVGFLLP. Over 427-472 the chain is Cytoplasmic; that stretch reads PRAKTDRRVPSGARARGCGYQLCINEQEELGLVGPGGATVSSICAS.

The protein belongs to the TMEM8 family. May interact with EZR. N-glycosylated.

Its subcellular location is the cell membrane. The protein localises to the cytoplasm. It is found in the nucleus. It localises to the mitochondrion. The protein resides in the endoplasmic reticulum. Functionally, may function as a regulator of the EGFR pathway. Probable tumor suppressor which may function in cell growth, proliferation and adhesion. In Bos taurus (Bovine), this protein is Transmembrane protein 8B (TMEM8B).